A 221-amino-acid chain; its full sequence is Thiamine-phosphate synthase (221 aa).

4-amino-2-methyl-5-(diphosphooxymethyl)pyrimidine contacts are provided by residues 39-43 (QLRCK) and asparagine 76. The Mg(2+) site is built by aspartate 77 and aspartate 96. Serine 114 is a binding site for 4-amino-2-methyl-5-(diphosphooxymethyl)pyrimidine. Residue 140-142 (TPT) participates in 2-[(2R,5Z)-2-carboxy-4-methylthiazol-5(2H)-ylidene]ethyl phosphate binding. Lysine 143 is a binding site for 4-amino-2-methyl-5-(diphosphooxymethyl)pyrimidine. Residue glycine 171 participates in 2-[(2R,5Z)-2-carboxy-4-methylthiazol-5(2H)-ylidene]ethyl phosphate binding.

The protein belongs to the thiamine-phosphate synthase family. Mg(2+) serves as cofactor.

It catalyses the reaction 2-[(2R,5Z)-2-carboxy-4-methylthiazol-5(2H)-ylidene]ethyl phosphate + 4-amino-2-methyl-5-(diphosphooxymethyl)pyrimidine + 2 H(+) = thiamine phosphate + CO2 + diphosphate. It carries out the reaction 2-(2-carboxy-4-methylthiazol-5-yl)ethyl phosphate + 4-amino-2-methyl-5-(diphosphooxymethyl)pyrimidine + 2 H(+) = thiamine phosphate + CO2 + diphosphate. The enzyme catalyses 4-methyl-5-(2-phosphooxyethyl)-thiazole + 4-amino-2-methyl-5-(diphosphooxymethyl)pyrimidine + H(+) = thiamine phosphate + diphosphate. The protein operates within cofactor biosynthesis; thiamine diphosphate biosynthesis; thiamine phosphate from 4-amino-2-methyl-5-diphosphomethylpyrimidine and 4-methyl-5-(2-phosphoethyl)-thiazole: step 1/1. In terms of biological role, condenses 4-methyl-5-(beta-hydroxyethyl)thiazole monophosphate (THZ-P) and 2-methyl-4-amino-5-hydroxymethyl pyrimidine pyrophosphate (HMP-PP) to form thiamine monophosphate (TMP). This Deinococcus geothermalis (strain DSM 11300 / CIP 105573 / AG-3a) protein is Thiamine-phosphate synthase.